A 1357-amino-acid chain; its full sequence is DNA-directed RNA polymerase subunit beta (1357 aa).

Belongs to the RNA polymerase beta chain family. The RNAP catalytic core consists of 2 alpha, 1 beta, 1 beta' and 1 omega subunit. When a sigma factor is associated with the core the holoenzyme is formed, which can initiate transcription.

It catalyses the reaction RNA(n) + a ribonucleoside 5'-triphosphate = RNA(n+1) + diphosphate. In terms of biological role, DNA-dependent RNA polymerase catalyzes the transcription of DNA into RNA using the four ribonucleoside triphosphates as substrates. This is DNA-directed RNA polymerase subunit beta from Pseudomonas syringae pv. tomato (strain ATCC BAA-871 / DC3000).